A 288-amino-acid polypeptide reads, in one-letter code: Pteridine reductase 1 (288 aa).

Arginine 17–serine 40 contributes to the NADP(+) binding site. Substrate is bound at residue serine 175. The active-site Proton acceptor is tyrosine 194.

It belongs to the short-chain dehydrogenases/reductases (SDR) family. In terms of assembly, homotetramer.

It carries out the reaction (6R)-L-erythro-5,6,7,8-tetrahydrobiopterin + 2 NADP(+) = L-erythro-biopterin + 2 NADPH + 2 H(+). It participates in cofactor biosynthesis; tetrahydrobiopterin biosynthesis; tetrahydrobiopterin from biopterin: step 1/1. In terms of biological role, exhibits a NADPH-dependent biopterin reductase activity. Has good activity with folate and significant activity with dihydrofolate and dihydrobiopterin, but not with quinonoid dihydrobiopterin. Confers resistance to methotrexate (MTX). This chain is Pteridine reductase 1 (PTR1), found in Leishmania major.